Here is a 499-residue protein sequence, read N- to C-terminus: Gamma-aminobutyric acid receptor subunit beta (499 aa).

Positions 1–23 (MWGIIVPFFSASLMCSLVAVVRC) are cleaved as a signal peptide. Over 24–251 (QQDTDHFANV…IFQLQRNIGY (228 aa)) the chain is Extracellular. 4 N-linked (GlcNAc...) asparagine glycosylation sites follow: Asn-32, Asn-98, Asn-106, and Asn-152. An intrachain disulfide couples Cys-167 to Cys-181. 3 helical membrane passes run 252-273 (FIFQTYLPSILIVMLSWVSFWI), 278-299 (TSARVALGITTVLTMTTISNGV), and 311-333 (AIDIYLVMCFVFVFAALLEYAAV). At 334 to 475 (NYTYWGARAK…RVQDVNTIDK (142 aa)) the chain is on the cytoplasmic side. A helical transmembrane segment spans residues 476–499 (YARLMFPLLFIIFNTSYWSVYLLT).

The protein belongs to the ligand-gated ion channel (TC 1.A.9) family. Gamma-aminobutyric acid receptor (TC 1.A.9.5) subfamily. Generally pentameric. There are five types of GABA(A) receptor chains: alpha, beta, gamma, delta, and rho.

The protein localises to the postsynaptic cell membrane. The protein resides in the cell membrane. Functionally, GABA, an inhibitory neurotransmitter, mediates neuronal inhibition by binding to the GABA/benzodiazepine receptor and opening an integral chloride channel. This chain is Gamma-aminobutyric acid receptor subunit beta, found in Lymnaea stagnalis (Great pond snail).